The chain runs to 294 residues: Cytosolic Fe-S cluster assembly factor CFD1 (294 aa).

25-32 (GKGGVGKS) contributes to the ATP binding site. Positions 214 and 217 each coordinate [4Fe-4S] cluster.

This sequence belongs to the Mrp/NBP35 ATP-binding proteins family. NUBP2/CFD1 subfamily. As to quaternary structure, heterotetramer of 2 NBP35 and 2 CFD1 chains. [4Fe-4S] cluster serves as cofactor.

It is found in the cytoplasm. Component of the cytosolic iron-sulfur (Fe/S) protein assembly (CIA) machinery. Required for maturation of extramitochondrial Fe-S proteins. The NBP35-CFD1 heterotetramer forms a Fe-S scaffold complex, mediating the de novo assembly of an Fe-S cluster and its transfer to target apoproteins. Required for biogenesis and export of both ribosomal subunits, which may reflect a role in assembly of the Fe/S clusters in RLI1, a protein which performs rRNA processing and ribosome export. The polypeptide is Cytosolic Fe-S cluster assembly factor CFD1 (Candida albicans (strain SC5314 / ATCC MYA-2876) (Yeast)).